The primary structure comprises 798 residues: Elongation factor G, mitochondrial (798 aa).

A mitochondrion-targeting transit peptide spans 1–24; the sequence is MRVIRAAAALNSSCAASSRQGARY. The tr-type G domain occupies 97-383; the sequence is SMVRNIGIAA…AVCDYLPNPG (287 aa). GTP contacts are provided by residues 106–113, 181–185, and 235–238; these read AHIDSGKT, DTPGH, and NKMD.

This sequence belongs to the TRAFAC class translation factor GTPase superfamily. Classic translation factor GTPase family. EF-G/EF-2 subfamily.

The protein resides in the mitochondrion. It functions in the pathway protein biosynthesis; polypeptide chain elongation. Its function is as follows. Mitochondrial GTPase that catalyzes the GTP-dependent ribosomal translocation step during translation elongation. During this step, the ribosome changes from the pre-translocational (PRE) to the post-translocational (POST) state as the newly formed A-site-bound peptidyl-tRNA and P-site-bound deacylated tRNA move to the P and E sites, respectively. Catalyzes the coordinated movement of the two tRNA molecules, the mRNA and conformational changes in the ribosome. The polypeptide is Elongation factor G, mitochondrial (Chaetomium globosum (strain ATCC 6205 / CBS 148.51 / DSM 1962 / NBRC 6347 / NRRL 1970) (Soil fungus)).